The primary structure comprises 359 residues: Outer membrane protein assembly factor BamC (359 aa).

Residues 1–34 (MASLFDKNSFQMTRLQKTAVAKVVGVSLIMLLAA) form the signal peptide. Cysteine 35 carries the N-palmitoyl cysteine lipid modification. Cysteine 35 carries the S-diacylglycerol cysteine lipid modification.

Belongs to the BamC family. In terms of assembly, part of the Bam complex, which is composed of the outer membrane protein BamA, and four lipoproteins BamB, BamC, BamD and BamE.

Its subcellular location is the cell outer membrane. Part of the outer membrane protein assembly complex, which is involved in assembly and insertion of beta-barrel proteins into the outer membrane. This chain is Outer membrane protein assembly factor BamC, found in Rahnella sp. (strain Y9602).